Consider the following 328-residue polypeptide: DNA-directed RNA polymerase subunit alpha (328 aa).

Positions 1–234 are alpha N-terminal domain (alpha-NTD); the sequence is MQGSVTEFLK…EQLDAFVDLR (234 aa). Residues 248–328 are alpha C-terminal domain (alpha-CTD); it reads FDPILLRPVD…NWPPASIAED (81 aa).

The protein belongs to the RNA polymerase alpha chain family. In terms of assembly, homodimer. The RNAP catalytic core consists of 2 alpha, 1 beta, 1 beta' and 1 omega subunit. When a sigma factor is associated with the core the holoenzyme is formed, which can initiate transcription.

The enzyme catalyses RNA(n) + a ribonucleoside 5'-triphosphate = RNA(n+1) + diphosphate. Functionally, DNA-dependent RNA polymerase catalyzes the transcription of DNA into RNA using the four ribonucleoside triphosphates as substrates. The protein is DNA-directed RNA polymerase subunit alpha of Haemophilus influenzae (strain PittEE).